Here is a 364-residue protein sequence, read N- to C-terminus: Paraneoplastic antigen Ma2 homolog (364 aa).

Alanine 2 bears the N-acetylalanine mark. Acidic residues predominate over residues 335 to 351 (EEEEATFENENTEEPEG). Residues 335–364 (EEEEATFENENTEEPEGGDGYGHWGNEAND) are disordered.

It belongs to the PNMA family.

Its subcellular location is the nucleus. It is found in the nucleolus. This chain is Paraneoplastic antigen Ma2 homolog (PNMA2), found in Bos taurus (Bovine).